Consider the following 229-residue polypeptide: Uracil-DNA glycosylase (229 aa).

The active-site Proton acceptor is the aspartate 64.

Belongs to the uracil-DNA glycosylase (UDG) superfamily. UNG family.

The protein resides in the cytoplasm. It carries out the reaction Hydrolyzes single-stranded DNA or mismatched double-stranded DNA and polynucleotides, releasing free uracil.. Functionally, excises uracil residues from the DNA which can arise as a result of misincorporation of dUMP residues by DNA polymerase or due to deamination of cytosine. The sequence is that of Uracil-DNA glycosylase from Escherichia coli O81 (strain ED1a).